We begin with the raw amino-acid sequence, 135 residues long: Early nodulin-5 (135 aa).

An N-terminal signal peptide occupies residues 1–23 (MASSSSPIFLMIIFSMWLLFSYS).

As to expression, invasion zone and early symbiotic zone.

Functionally, involved in the infection process during the plant-rhizobium interaction. The chain is Early nodulin-5 (ENOD5) from Pisum sativum (Garden pea).